The following is a 332-amino-acid chain: Geranylgeranyl pyrophosphate synthase 2 (332 aa).

Residues Lys55, Arg58, and His87 each coordinate isopentenyl diphosphate. 2 residues coordinate Mg(2+): Asp94 and Asp98. Arg103 serves as a coordination point for dimethylallyl diphosphate. Arg104 contributes to the isopentenyl diphosphate binding site. Residues Lys181, Thr182, and Gln218 each contribute to the dimethylallyl diphosphate site. Asp221 contributes to the Mg(2+) binding site. Dimethylallyl diphosphate-binding residues include Asn225, Lys235, and Lys245.

The protein belongs to the FPP/GGPP synthase family. Requires Mg(2+) as cofactor.

The catalysed reaction is isopentenyl diphosphate + dimethylallyl diphosphate = (2E)-geranyl diphosphate + diphosphate. It carries out the reaction isopentenyl diphosphate + (2E)-geranyl diphosphate = (2E,6E)-farnesyl diphosphate + diphosphate. It catalyses the reaction isopentenyl diphosphate + (2E,6E)-farnesyl diphosphate = (2E,6E,10E)-geranylgeranyl diphosphate + diphosphate. Its function is as follows. Geranylgeranyl pyrophosphate synthase; part of the gene cluster 3 that mediates the biosynthesis of an isoprenoid secondary metabolite. The sequence is that of Geranylgeranyl pyrophosphate synthase 2 (GGS2) from Zymoseptoria tritici (strain CBS 115943 / IPO323) (Speckled leaf blotch fungus).